The chain runs to 250 residues: Exotoxin type A (250 aa).

A signal peptide spans 1 to 30 (MENNKEVLKKMVFFVLMKFLGLTILPKGIC). A disulfide bridge connects residues C117 and C128.

This sequence belongs to the staphylococcal/streptococcal toxin family.

Its function is as follows. Causative agent of the symptoms associated with scarlet fever, have been associated with streptococcal toxic shock-like disease and may play a role in the early events of rheumatic fever. The polypeptide is Exotoxin type A (speA) (Streptococcus pyogenes).